Consider the following 132-residue polypeptide: MKTIHVSVVTPDGPVYEDDVEMVSVKAKSGELGILPGHIPLVAPLEISAARLKKGGKTQYIAVSGGFLEVRPDNVTILAQAAERAEDIDVLRAKARKSGRTPLQSQQDDIDFKRAELALKRAMNRLSVAEMK.

It belongs to the ATPase epsilon chain family. F-type ATPases have 2 components, CF(1) - the catalytic core - and CF(0) - the membrane proton channel. CF(1) has five subunits: alpha(3), beta(3), gamma(1), delta(1), epsilon(1). CF(0) has three main subunits: a, b and c.

Its subcellular location is the cell membrane. Its function is as follows. Produces ATP from ADP in the presence of a proton gradient across the membrane. The polypeptide is ATP synthase epsilon chain (atpC) (Bacillus sp. (strain PS3)).